Consider the following 88-residue polypeptide: Small ribosomal subunit protein uS17 (88 aa).

It belongs to the universal ribosomal protein uS17 family. In terms of assembly, part of the 30S ribosomal subunit.

Its function is as follows. One of the primary rRNA binding proteins, it binds specifically to the 5'-end of 16S ribosomal RNA. The polypeptide is Small ribosomal subunit protein uS17 (Saccharophagus degradans (strain 2-40 / ATCC 43961 / DSM 17024)).